The chain runs to 90 residues: ATP synthase subunit e, mitochondrial (90 aa).

Ser-2 is modified (N-acetylserine). The helical transmembrane segment at 7-23 (VLRWSALGAGVVYGFVH) threads the bilayer.

In terms of assembly, F-type ATP synthases have 2 components, the catalytic core F(1) and the membrane-embedded component F(0), linked together by a central stalk and a peripheral stalk. The central stalk, also called rotor shaft, is often seen as part of F(1). The peripheral stalk is seen as part of F(0). F(0) contains the membrane channel next to the rotor. F-type ATP synthases form dimers but each monomer functions independently in ATP generation. The dimer consists of 17 different polypeptides: ATP1 (subunit alpha, 3 molecules per monomer, part of F(1)), ATP2 (subunit beta, 3 copies per monomer, part of F(1)), ATP3 (subunit gamma, part of the central stalk), ATP4 (subunit b, part of the peripheral stalk), ATP5/OSCP (subunit 5/OSCP, part of the peripheral stalk), ATP6 (subunit a, part of the peripheral stalk), ATP7 (subunit d, part of the peripheral stalk), ATP8 (subunit 8, part of the peripheral stalk), OLI1 (subunit c, part of the rotor, 10 molecules per monomer), ATP14 (subunit h, part of the peripheral stalk), ATP15 (subunit epsilon, part of the central stalk), ATP16 (subunit delta, part of the central stalk), ATP17 (subunit f, part of the peripheral stalk), ATP18 (subunit i/j, part of the peripheral stalk), ATP19 (subunit k, dimer-specific, at interface between monomers), ATP20 (subunit g, at interface between monomers), TIM11 (subunit e, at interface between monomers).

Its subcellular location is the mitochondrion inner membrane. In terms of biological role, mitochondrial membrane ATP synthase (F(1)F(0) ATP synthase or Complex V) produces ATP from ADP in the presence of a proton gradient across the membrane which is generated by electron transport complexes of the respiratory chain. F-type ATP synthases consist of two structural domains, F(1) - containing the extramembraneous catalytic core, and F(0) - containing the membrane proton channel, linked together by a central stalk and a peripheral stalk. During catalysis, ATP synthesis in the catalytic domain of F(1) is coupled via a rotary mechanism of the central stalk subunits to proton translocation. Part of the complex F(0) domain. Minor subunit located with subunit a/ATP6 in the membrane. Together with subunit g/ATP20, probably contributes to membrane curvature at the site of the ATP synthase dimer, ultimately contributing to formation of cristae. This is ATP synthase subunit e, mitochondrial from Yarrowia lipolytica (strain CLIB 122 / E 150) (Yeast).